A 215-amino-acid chain; its full sequence is Cytochrome b6 (215 aa).

A helical transmembrane segment spans residues 32 to 52 (IFYCIGGITFTCFLVQVATGF). Heme c is bound at residue Cys35. 6 residues coordinate heme b: Gly37, Arg83, His86, His100, Arg103, and Arg114. A helical membrane pass occupies residues 90 to 110 (ASMMVLMMVLHVFRVYLTGGF). The next 2 membrane-spanning stretches (helical) occupy residues 116 to 136 (LTWV…VTGY) and 186 to 206 (LHTF…FLMI). 2 residues coordinate heme b: His187 and His202. 2 residues coordinate heme c: Arg207 and Ile211. Ser212 serves as a coordination point for heme b.

This sequence belongs to the cytochrome b family. PetB subfamily. In terms of assembly, the 4 large subunits of the cytochrome b6-f complex are cytochrome b6, subunit IV (17 kDa polypeptide, PetD), cytochrome f and the Rieske protein, while the 4 small subunits are PetG, PetL, PetM and PetN. The complex functions as a dimer. It depends on heme b as a cofactor. Heme c serves as cofactor. Post-translationally, the N-terminus is blocked.

It is found in the plastid. The protein resides in the chloroplast thylakoid membrane. In terms of biological role, component of the cytochrome b6-f complex, which mediates electron transfer between photosystem II (PSII) and photosystem I (PSI), cyclic electron flow around PSI, and state transitions. The chain is Cytochrome b6 from Chlamydomonas reinhardtii (Chlamydomonas smithii).